Here is a 152-residue protein sequence, read N- to C-terminus: Protein SprT-like (152 aa).

A SprT-like domain is found at 7-147; the sequence is QRLVEEVSLQ…CGKCKGKLKP (141 aa). H67 is a binding site for Zn(2+). E68 is an active-site residue. H71 is a binding site for Zn(2+).

Belongs to the SprT family. Requires Zn(2+) as cofactor.

The protein resides in the cytoplasm. The chain is Protein SprT-like from Bacillus cereus (strain B4264).